The primary structure comprises 183 residues: Small ribosomal subunit protein uS5 (183 aa).

In terms of domain architecture, S5 DRBM spans 11–71 (FLERVVGINR…EEAKKSFFRV (61 aa)).

The protein belongs to the universal ribosomal protein uS5 family. In terms of assembly, part of the 30S ribosomal subunit. Contacts proteins S4 and S8.

Functionally, with S4 and S12 plays an important role in translational accuracy. Its function is as follows. Located at the back of the 30S subunit body where it stabilizes the conformation of the head with respect to the body. The sequence is that of Small ribosomal subunit protein uS5 from Micrococcus luteus (Micrococcus lysodeikticus).